The sequence spans 142 residues: Large ribosomal subunit protein uL11 (142 aa).

This sequence belongs to the universal ribosomal protein uL11 family. Part of the ribosomal stalk of the 50S ribosomal subunit. Interacts with L10 and the large rRNA to form the base of the stalk. L10 forms an elongated spine to which L12 dimers bind in a sequential fashion forming a multimeric L10(L12)X complex. One or more lysine residues are methylated.

Its function is as follows. Forms part of the ribosomal stalk which helps the ribosome interact with GTP-bound translation factors. This Leptospira borgpetersenii serovar Hardjo-bovis (strain JB197) protein is Large ribosomal subunit protein uL11.